The following is a 180-amino-acid chain: Pro-glucagon (180 aa).

Positions 1–20 (MKSVYFVAGLFIMLAQGSWQ) are cleaved as a signal peptide. A disordered region spans residues 23 to 58 (LQDTEEKPRSVSASQTDMLDDPDQMNEDKRHSQGTF). Position 54 is a phosphoserine (S54). Positions 84–89 (NRNNIA) are excised as a propeptide. 2 positions are modified to phosphoserine: S105 and S108. R127 is subject to Arginine amide. Residues 131–145 (DFPEEVAIVEELGRR) constitute a propeptide that is removed on maturation. Residues S150 and S152 each carry the phosphoserine modification.

Belongs to the glucagon family. Proglucagon is post-translationally processed in a tissue-specific manner in pancreatic A cells and intestinal L cells. In pancreatic A cells, the major bioactive hormone is glucagon cleaved by PCSK2/PC2. In the intestinal L cells PCSK1/PC1 liberates GLP-1, GLP-2, glicentin and oxyntomodulin. GLP-1 is further N-terminally truncated by post-translational processing in the intestinal L cells resulting in GLP-1(7-37) GLP-1-(7-36)amide. The C-terminal amidation is neither important for the metabolism of GLP-1 nor for its effects on the endocrine pancreas.

Its subcellular location is the secreted. In terms of biological role, plays a key role in glucose metabolism and homeostasis. Regulates blood glucose by increasing gluconeogenesis and decreasing glycolysis. A counterregulatory hormone of insulin, raises plasma glucose levels in response to insulin-induced hypoglycemia. Plays an important role in initiating and maintaining hyperglycemic conditions in diabetes. Functionally, potent stimulator of glucose-dependent insulin release. Also stimulates insulin release in response to IL6. Plays important roles on gastric motility and the suppression of plasma glucagon levels. May be involved in the suppression of satiety and stimulation of glucose disposal in peripheral tissues, independent of the actions of insulin. Has growth-promoting activities on intestinal epithelium. May also regulate the hypothalamic pituitary axis (HPA) via effects on LH, TSH, CRH, oxytocin, and vasopressin secretion. Increases islet mass through stimulation of islet neogenesis and pancreatic beta cell proliferation. Inhibits beta cell apoptosis. Stimulates intestinal growth and up-regulates villus height in the small intestine, concomitant with increased crypt cell proliferation and decreased enterocyte apoptosis. The gastrointestinal tract, from the stomach to the colon is the principal target for GLP-2 action. Plays a key role in nutrient homeostasis, enhancing nutrient assimilation through enhanced gastrointestinal function, as well as increasing nutrient disposal. Stimulates intestinal glucose transport and decreases mucosal permeability. Its function is as follows. Significantly reduces food intake. Inhibits gastric emptying in humans. Suppression of gastric emptying may lead to increased gastric distension, which may contribute to satiety by causing a sensation of fullness. In terms of biological role, may modulate gastric acid secretion and the gastro-pyloro-duodenal activity. May play an important role in intestinal mucosal growth in the early period of life. This chain is Pro-glucagon (GCG), found in Cavia porcellus (Guinea pig).